A 152-amino-acid polypeptide reads, in one-letter code: SsrA-binding protein (152 aa).

Belongs to the SmpB family.

It localises to the cytoplasm. Required for rescue of stalled ribosomes mediated by trans-translation. Binds to transfer-messenger RNA (tmRNA), required for stable association of tmRNA with ribosomes. tmRNA and SmpB together mimic tRNA shape, replacing the anticodon stem-loop with SmpB. tmRNA is encoded by the ssrA gene; the 2 termini fold to resemble tRNA(Ala) and it encodes a 'tag peptide', a short internal open reading frame. During trans-translation Ala-aminoacylated tmRNA acts like a tRNA, entering the A-site of stalled ribosomes, displacing the stalled mRNA. The ribosome then switches to translate the ORF on the tmRNA; the nascent peptide is terminated with the 'tag peptide' encoded by the tmRNA and targeted for degradation. The ribosome is freed to recommence translation, which seems to be the essential function of trans-translation. The polypeptide is SsrA-binding protein (Rickettsia conorii (strain ATCC VR-613 / Malish 7)).